The chain runs to 177 residues: Peptide methionine sulfoxide reductase MsrA (177 aa).

Residue cysteine 15 is part of the active site.

This sequence belongs to the MsrA Met sulfoxide reductase family.

It carries out the reaction L-methionyl-[protein] + [thioredoxin]-disulfide + H2O = L-methionyl-(S)-S-oxide-[protein] + [thioredoxin]-dithiol. The enzyme catalyses [thioredoxin]-disulfide + L-methionine + H2O = L-methionine (S)-S-oxide + [thioredoxin]-dithiol. In terms of biological role, has an important function as a repair enzyme for proteins that have been inactivated by oxidation. Catalyzes the reversible oxidation-reduction of methionine sulfoxide in proteins to methionine. The protein is Peptide methionine sulfoxide reductase MsrA of Listeria welshimeri serovar 6b (strain ATCC 35897 / DSM 20650 / CCUG 15529 / CIP 8149 / NCTC 11857 / SLCC 5334 / V8).